The chain runs to 124 residues: Small ribosomal subunit protein uS13 (124 aa).

Basic residues predominate over residues 94-117 (NLPVRGQRTRTNARTRKGPRKTVA). The disordered stretch occupies residues 94–124 (NLPVRGQRTRTNARTRKGPRKTVANKKIESK).

The protein belongs to the universal ribosomal protein uS13 family. Part of the 30S ribosomal subunit. Forms a loose heterodimer with protein S19. Forms two bridges to the 50S subunit in the 70S ribosome.

Located at the top of the head of the 30S subunit, it contacts several helices of the 16S rRNA. In the 70S ribosome it contacts the 23S rRNA (bridge B1a) and protein L5 of the 50S subunit (bridge B1b), connecting the 2 subunits; these bridges are implicated in subunit movement. Contacts the tRNAs in the A and P-sites. The chain is Small ribosomal subunit protein uS13 from Mycoplasma pneumoniae (strain ATCC 29342 / M129 / Subtype 1) (Mycoplasmoides pneumoniae).